Consider the following 73-residue polypeptide: Large ribosomal subunit protein uL24 (73 aa).

Basic and acidic residues predominate over residues 51-65 (DDNPKGGFIHKEKPM). The interval 51 to 73 (DDNPKGGFIHKEKPMHISNVKKA) is disordered.

Belongs to the universal ribosomal protein uL24 family. In terms of assembly, part of the 50S ribosomal subunit.

One of two assembly initiator proteins, it binds directly to the 5'-end of the 23S rRNA, where it nucleates assembly of the 50S subunit. In terms of biological role, one of the proteins that surrounds the polypeptide exit tunnel on the outside of the subunit. The chain is Large ribosomal subunit protein uL24 from Helicobacter acinonychis (strain Sheeba).